The sequence spans 164 residues: Ribonuclease P protein component 2 (164 aa).

It belongs to the eukaryotic/archaeal RNase P protein component 2 family. Consists of a catalytic RNA component and at least 4-5 protein subunits.

Its subcellular location is the cytoplasm. It catalyses the reaction Endonucleolytic cleavage of RNA, removing 5'-extranucleotides from tRNA precursor.. Its function is as follows. Part of ribonuclease P, a protein complex that generates mature tRNA molecules by cleaving their 5'-ends. The protein is Ribonuclease P protein component 2 of Halobacterium salinarum (strain ATCC 29341 / DSM 671 / R1).